The primary structure comprises 762 residues: 5-methyltetrahydropteroyltriglutamate--homocysteine methyltransferase (762 aa).

5-methyltetrahydropteroyltri-L-glutamate contacts are provided by residues 16 to 19 (RELK) and Lys118. L-homocysteine contacts are provided by residues 439 to 441 (IGS) and Glu492. Residues 439-441 (IGS) and Glu492 contribute to the L-methionine site. 5-methyltetrahydropteroyltri-L-glutamate-binding positions include 523–524 (RC) and Trp569. Asp607 is an L-homocysteine binding site. An L-methionine-binding site is contributed by Asp607. Residue Glu613 coordinates 5-methyltetrahydropteroyltri-L-glutamate. Residues His649, Cys651, and Glu673 each coordinate Zn(2+). His702 acts as the Proton donor in catalysis. Zn(2+) is bound at residue Cys734.

Belongs to the vitamin-B12 independent methionine synthase family. It depends on Zn(2+) as a cofactor.

The catalysed reaction is 5-methyltetrahydropteroyltri-L-glutamate + L-homocysteine = tetrahydropteroyltri-L-glutamate + L-methionine. It functions in the pathway amino-acid biosynthesis; L-methionine biosynthesis via de novo pathway; L-methionine from L-homocysteine (MetE route): step 1/1. Functionally, catalyzes the transfer of a methyl group from 5-methyltetrahydrofolate to homocysteine resulting in methionine formation. The polypeptide is 5-methyltetrahydropteroyltriglutamate--homocysteine methyltransferase (Pseudomonas entomophila (strain L48)).